Consider the following 324-residue polypeptide: Viral cathepsin (324 aa).

An N-terminal signal peptide occupies residues 1 to 16 (MNKIMLCLLVCGVVHA). Residues 17 to 113 (ATYDLLKAPN…VILDRPPDRG (97 aa)) constitute a propeptide, activation peptide. 3 disulfides stabilise this stretch: C134–C175, C168–C208, and C263–C311. Residue C137 is part of the active site. N-linked (GlcNAc...) asparagine; by host glycosylation is present at N159. Active-site residues include H270 and N290.

This sequence belongs to the peptidase C1 family. Post-translationally, synthesized as an inactive proenzyme and activated by proteolytic removal of the inhibitory propeptide.

The enzyme catalyses Endopeptidase of broad specificity, hydrolyzing substrates of both cathepsin L and cathepsin B.. Cysteine protease that plays an essential role in host liquefaction to facilitate horizontal transmission of the virus. May participate in the degradation of foreign protein expressed by the baculovirus system. This Orgyia pseudotsugata (Douglas-fir tussock moth) protein is Viral cathepsin (VCATH).